We begin with the raw amino-acid sequence, 543 residues long: Steroid receptor seven-up, isoforms B/C (543 aa).

Residues 38–191 (PPHSAWHEPP…HSQSSNSGSQ (154 aa)) are disordered. A compositionally biased stretch (low complexity) spans 56-68 (AASAGPGTTTGSV). Residues 83-101 (QQSAVIKQDLSCPSLNQAG) are compositionally biased toward polar residues. Residues 122–141 (GSAGGHHSGSGSGSGSGVNP) show a composition bias toward gly residues. The segment covering 158-170 (MLTSIKGQPTGCG) has biased composition (polar residues). A compositionally biased stretch (low complexity) spans 171-191 (STTPSSQANSSHSQSSNSGSQ). A DNA-binding region (nuclear receptor) is located at residues 197-272 (NIECVVCGDK…MGMRREAVQR (76 aa)). 2 consecutive NR C4-type zinc fingers follow at residues 200 to 220 (CVVC…CEGC) and 236 to 260 (CRGS…LKKC). An NR LBD domain is found at 307 to 532 (YLSSYISLLL…TLIRDMLLSG (226 aa)).

It belongs to the nuclear hormone receptor family. NR2 subfamily. In terms of tissue distribution, expressed in several embryonic tissues; dorsal vessel, oenocyte and fat body. CNS expression is dynamic and confined to temporally restricted subsections of the NB lineage; expressed in many NB and GMCs, but only a small number of neurons.

It localises to the nucleus. Its function is as follows. Receptor that is required in photoreceptors R1, R3, R4 and R6 during eye development; generation of the ganglion mother cell-2 (GMC-2) fate in the nb7-3 lineage, coinciding with the transition in the expression of HB to KR in the neuroblasts (NBs). In Drosophila melanogaster (Fruit fly), this protein is Steroid receptor seven-up, isoforms B/C (svp).